The chain runs to 477 residues: Regulator of G-protein signaling 7 (477 aa).

The DEP domain occupies 37 to 112; that stretch reads EKNGIPIRTV…DDGTFYRFQT (76 aa). Phosphoserine occurs at positions 229 and 241. Residues 236 to 257 form a disordered region; it reads DIRSHSPTHTPTPETKPPTEDE. At Thr-243 the chain carries Phosphothreonine. The G protein gamma domain maps to 255–316; the sequence is EDELHRQIKY…LSDDTTFWEL (62 aa). An RGS domain is found at 333-448; it reads GMDEALKDPV…IRSSAYQELL (116 aa). Position 434 is a phosphoserine (Ser-434).

Interacts with GNB5, forming the RGS7-GNB5 complex. Interacts with GPR158; promotes the GTPase activator activity of the RGS7-GNB5 complex in absence of glycine, in contrast GTPase activator activity of the RGS7-GNB5 complex is inhibited in presence of glycine. Interacts with GPR179. Interacts with PKD1; this prevents rapid proteasomal degradation. Interacts with RGS7BP, leading to regulate the subcellular location of the heterodimer formed with GNB5. Interacts (phosphorylated form) with 14-3-3 protein YWHAQ. Interacts with SNAPIN. Interacts with GNAI1. Interacts with GNAO1, GNAI3 and GNAZ. In terms of processing, palmitoylated. Ubiquitinated, leading to rapid proteasomal degradation. Post-translationally, phosphorylation and subsequent interaction with 14-3-3 proteins inhibits GAP activity. As to expression, brain-specific. Predominantly cerebellar granule cells.

It is found in the cytoplasm. The protein resides in the cytosol. Its subcellular location is the cell membrane. It localises to the membrane. GTPase activator component of the RGS7-GNB5 complex that regulates G protein-coupled receptor signaling cascades. The RGS7-GNB5 complex acts as an inhibitor signal transduction by promoting the GTPase activity of G protein alpha subunits, such as GNAO1, thereby driving them into their inactive GDP-bound form. May play a role in synaptic vesicle exocytosis. Glycine-dependent regulation of the RGS7-GNB5 complex by GPR158 affects mood and cognition via its ability to regulate neuronal excitability in L2/L3 pyramidal neurons of the prefrontal cortex. Modulates the activity of potassium channels that are activated by GNAO1 in response to muscarinic acetylcholine receptor M2/CHRM2 signaling. This chain is Regulator of G-protein signaling 7 (Rgs7), found in Rattus norvegicus (Rat).